Here is a 326-residue protein sequence, read N- to C-terminus: MSCASEVQAQLFTHPVQIIYACVQTVLFLATIIGSLLAIVQLCKKTTIPDSTKVLLIGALFFANAHELAYFSSPFKVFKMNLFHTNTSCYPLASTLECIPTTTVLAMGISGNMLIQSALSIFRLLATIFPVCYSRMRALPGVVLLFMVLIPSFLSYSWIRSDIVLDDYQMFCSQWSANISSRANTYLEYCSYLTVAHIIINALIILRNRSVESKCRFDVQQRYLNSETLKTTQTICYLSIAQFLAMFLYSGGVLFMRKNQKNIPTLIYINVIVWVYAPPYACVSLAPLILFSLWNLKKQRQIRIQSITVQKETQEDHIRKLQLSWG.

Residues 1–17 (MSCASEVQAQLFTHPVQ) lie on the Extracellular side of the membrane. Residues 18–38 (IIYACVQTVLFLATIIGSLLA) form a helical membrane-spanning segment. Residues 39 to 54 (IVQLCKKTTIPDSTKV) are Cytoplasmic-facing. Residues 55–75 (LLIGALFFANAHELAYFSSPF) traverse the membrane as a helical segment. Over 76 to 101 (KVFKMNLFHTNTSCYPLASTLECIPT) the chain is Extracellular. Residues 102–122 (TTVLAMGISGNMLIQSALSIF) form a helical membrane-spanning segment. Over 123–138 (RLLATIFPVCYSRMRA) the chain is Cytoplasmic. A helical membrane pass occupies residues 139–159 (LPGVVLLFMVLIPSFLSYSWI). Over 160–185 (RSDIVLDDYQMFCSQWSANISSRANT) the chain is Extracellular. Residues 186–206 (YLEYCSYLTVAHIIINALIIL) form a helical membrane-spanning segment. At 207–234 (RNRSVESKCRFDVQQRYLNSETLKTTQT) the chain is on the cytoplasmic side. A helical transmembrane segment spans residues 235–255 (ICYLSIAQFLAMFLYSGGVLF). The Extracellular segment spans residues 256–270 (MRKNQKNIPTLIYIN). Residues 271–291 (VIVWVYAPPYACVSLAPLILF) form a helical membrane-spanning segment. Over 292–326 (SLWNLKKQRQIRIQSITVQKETQEDHIRKLQLSWG) the chain is Cytoplasmic.

It belongs to the nematode receptor-like protein sra family.

Its subcellular location is the membrane. This chain is Serpentine receptor class alpha-12, found in Caenorhabditis briggsae.